The following is a 185-amino-acid chain: Small ribosomal subunit protein uS5 (185 aa).

One can recognise an S5 DRBM domain in the interval 18–81 (FVDKLVHINR…ESAKRALIRV (64 aa)).

The protein belongs to the universal ribosomal protein uS5 family. In terms of assembly, part of the 30S ribosomal subunit. Contacts proteins S4 and S8.

Its function is as follows. With S4 and S12 plays an important role in translational accuracy. In terms of biological role, located at the back of the 30S subunit body where it stabilizes the conformation of the head with respect to the body. This is Small ribosomal subunit protein uS5 from Azorhizobium caulinodans (strain ATCC 43989 / DSM 5975 / JCM 20966 / LMG 6465 / NBRC 14845 / NCIMB 13405 / ORS 571).